The sequence spans 361 residues: MLYFLAEHLAKLEFLKSIYLRAFLGFVISFCIVLFAGRPFIKYLKIKKFGEEIRDDGPSSHFSKKGTPTMGGVLIIAAVLLTSIFINDLTNSLILLVLLSTIMFAAIGFIDDYRKFTVSKKGLAGKKKLLFQGAIGLIIWAYIYFIGLTGRPMVDLSLINPISAYPYYIGAIGLFFLIQIVLMGTSNAVNITDGLDGLAIMPMIICSTILGVIAYFTGHTELSSHLHLFYTVGSGELSVFLSAVTGAGLGFLWYNCYPAQIFMGDTGSLTLGGILGVIAIILKQELMLPIMGFIFVLEALSVILQVGSFKLRGKRIFKMAPIHHHFELMGIPESKVTMRFWIGTLIFGIIALGAIKMRGIL.

The next 10 helical transmembrane spans lie at 17–37 (SIYL…LFAG), 66–86 (GTPT…SIFI), 90–110 (TNSL…IGFI), 129–149 (LLFQ…IGLT), 162–182 (ISAY…QIVL), 197–217 (GLAI…AYFT), 232–252 (VGSG…LGFL), 261–281 (IFMG…IAII), 286–306 (LMLP…ILQV), and 340–360 (FWIG…MRGI).

Belongs to the glycosyltransferase 4 family. MraY subfamily. The cofactor is Mg(2+).

Its subcellular location is the cell inner membrane. The enzyme catalyses UDP-N-acetyl-alpha-D-muramoyl-L-alanyl-gamma-D-glutamyl-meso-2,6-diaminopimeloyl-D-alanyl-D-alanine + di-trans,octa-cis-undecaprenyl phosphate = di-trans,octa-cis-undecaprenyl diphospho-N-acetyl-alpha-D-muramoyl-L-alanyl-D-glutamyl-meso-2,6-diaminopimeloyl-D-alanyl-D-alanine + UMP. It participates in cell wall biogenesis; peptidoglycan biosynthesis. Its function is as follows. Catalyzes the initial step of the lipid cycle reactions in the biosynthesis of the cell wall peptidoglycan: transfers peptidoglycan precursor phospho-MurNAc-pentapeptide from UDP-MurNAc-pentapeptide onto the lipid carrier undecaprenyl phosphate, yielding undecaprenyl-pyrophosphoryl-MurNAc-pentapeptide, known as lipid I. In Fusobacterium nucleatum subsp. nucleatum (strain ATCC 25586 / DSM 15643 / BCRC 10681 / CIP 101130 / JCM 8532 / KCTC 2640 / LMG 13131 / VPI 4355), this protein is Phospho-N-acetylmuramoyl-pentapeptide-transferase.